Here is a 460-residue protein sequence, read N- to C-terminus: V-type ATP synthase beta chain (460 aa).

It belongs to the ATPase alpha/beta chains family.

Its function is as follows. Produces ATP from ADP in the presence of a proton gradient across the membrane. The V-type beta chain is a regulatory subunit. This is V-type ATP synthase beta chain from Thermotoga neapolitana (strain ATCC 49049 / DSM 4359 / NBRC 107923 / NS-E).